Here is a 369-residue protein sequence, read N- to C-terminus: Anhydro-N-acetylmuramic acid kinase (369 aa).

12 to 19 (GTSLDGVD) is a binding site for ATP.

Belongs to the anhydro-N-acetylmuramic acid kinase family.

It catalyses the reaction 1,6-anhydro-N-acetyl-beta-muramate + ATP + H2O = N-acetyl-D-muramate 6-phosphate + ADP + H(+). It functions in the pathway amino-sugar metabolism; 1,6-anhydro-N-acetylmuramate degradation. It participates in cell wall biogenesis; peptidoglycan recycling. Catalyzes the specific phosphorylation of 1,6-anhydro-N-acetylmuramic acid (anhMurNAc) with the simultaneous cleavage of the 1,6-anhydro ring, generating MurNAc-6-P. Is required for the utilization of anhMurNAc either imported from the medium or derived from its own cell wall murein, and thus plays a role in cell wall recycling. This is Anhydro-N-acetylmuramic acid kinase from Escherichia coli O157:H7.